Reading from the N-terminus, the 115-residue chain is uncharacterized protein (115 aa).

The chain crosses the membrane as a helical span at residues 36–56 (SFFSLGLIACFCIFLIIVLSE).

Its subcellular location is the membrane. This is an uncharacterized protein from Saccharomyces cerevisiae (strain ATCC 204508 / S288c) (Baker's yeast).